Here is a 457-residue protein sequence, read N- to C-terminus: Methylenetetrahydrofolate--tRNA-(uracil-5-)-methyltransferase TrmFO (457 aa).

12–17 (GGGLAG) contributes to the FAD binding site.

Belongs to the MnmG family. TrmFO subfamily. The cofactor is FAD.

It localises to the cytoplasm. The catalysed reaction is uridine(54) in tRNA + (6R)-5,10-methylene-5,6,7,8-tetrahydrofolate + NADH + H(+) = 5-methyluridine(54) in tRNA + (6S)-5,6,7,8-tetrahydrofolate + NAD(+). It carries out the reaction uridine(54) in tRNA + (6R)-5,10-methylene-5,6,7,8-tetrahydrofolate + NADPH + H(+) = 5-methyluridine(54) in tRNA + (6S)-5,6,7,8-tetrahydrofolate + NADP(+). Catalyzes the folate-dependent formation of 5-methyl-uridine at position 54 (M-5-U54) in all tRNAs. This is Methylenetetrahydrofolate--tRNA-(uracil-5-)-methyltransferase TrmFO from Myxococcus xanthus (strain DK1622).